Reading from the N-terminus, the 285-residue chain is Bifunctional protein FolD (285 aa).

NADP(+) is bound by residues 165–167 and Ser190; that span reads GRS.

Belongs to the tetrahydrofolate dehydrogenase/cyclohydrolase family. In terms of assembly, homodimer.

The enzyme catalyses (6R)-5,10-methylene-5,6,7,8-tetrahydrofolate + NADP(+) = (6R)-5,10-methenyltetrahydrofolate + NADPH. It carries out the reaction (6R)-5,10-methenyltetrahydrofolate + H2O = (6R)-10-formyltetrahydrofolate + H(+). The protein operates within one-carbon metabolism; tetrahydrofolate interconversion. Functionally, catalyzes the oxidation of 5,10-methylenetetrahydrofolate to 5,10-methenyltetrahydrofolate and then the hydrolysis of 5,10-methenyltetrahydrofolate to 10-formyltetrahydrofolate. The chain is Bifunctional protein FolD from Staphylococcus carnosus (strain TM300).